The primary structure comprises 357 residues: Aurora kinase A- and ninein-interacting protein (357 aa).

A compositionally biased stretch (polar residues) spans Leu-71–Gln-91. The disordered stretch occupies residues Leu-71 to Lys-98. Residues Arg-187 to Phe-357 form an interaction with AURKA region. A phosphoserine mark is found at Ser-267 and Ser-292. The interaction with RBBP8/CtIP stretch occupies residues Lys-281–Phe-357.

The protein belongs to the AUNIP family. In terms of assembly, interacts (via C-terminus) with AURKA (via C-terminus). Interacts (via N-terminus) with NIN; this interaction blocks NIN phosphorylation by both AURKA and GSK3B. Identified in a complex with NIN and AURKA. Interacts with RBBP8/CtIP. In terms of tissue distribution, expressed in heart, skeletal muscles, placenta and testis.

The protein localises to the nucleus. It is found in the chromosome. The protein resides in the cytoplasm. It localises to the cytoskeleton. Its subcellular location is the microtubule organizing center. The protein localises to the centrosome. It is found in the spindle pole. In terms of biological role, DNA-binding protein that accumulates at DNA double-strand breaks (DSBs) following DNA damage and promotes DNA resection and homologous recombination. Serves as a sensor of DNA damage: binds DNA with a strong preference for DNA substrates that mimic structures generated at stalled replication forks, and anchors RBBP8/CtIP to DSB sites to promote DNA end resection and ensuing homologous recombination repair. Inhibits non-homologous end joining (NHEJ). Required for the dynamic movement of AURKA at the centrosomes and spindle apparatus during the cell cycle. The sequence is that of Aurora kinase A- and ninein-interacting protein from Homo sapiens (Human).